The primary structure comprises 213 residues: Small ribosomal subunit protein uS3 (213 aa).

The KH type-2 domain maps to 38 to 106 (IREYLENRLS…RVHINIVEIK (69 aa)).

It belongs to the universal ribosomal protein uS3 family. In terms of assembly, part of the 30S ribosomal subunit. Forms a tight complex with proteins S10 and S14.

Its function is as follows. Binds the lower part of the 30S subunit head. Binds mRNA in the 70S ribosome, positioning it for translation. The protein is Small ribosomal subunit protein uS3 of Oceanobacillus iheyensis (strain DSM 14371 / CIP 107618 / JCM 11309 / KCTC 3954 / HTE831).